Reading from the N-terminus, the 333-residue chain is DNA-directed RNA polymerase subunit alpha (333 aa).

Residues 1–234 (MQSSVNEFLT…QQLAAFVDLK (234 aa)) form an alpha N-terminal domain (alpha-NTD) region. The interval 248-333 (IDPILLRPVD…SLKKDDKATA (86 aa)) is alpha C-terminal domain (alpha-CTD).

Belongs to the RNA polymerase alpha chain family. As to quaternary structure, homodimer. The RNAP catalytic core consists of 2 alpha, 1 beta, 1 beta' and 1 omega subunit. When a sigma factor is associated with the core the holoenzyme is formed, which can initiate transcription.

The enzyme catalyses RNA(n) + a ribonucleoside 5'-triphosphate = RNA(n+1) + diphosphate. Functionally, DNA-dependent RNA polymerase catalyzes the transcription of DNA into RNA using the four ribonucleoside triphosphates as substrates. This Pseudomonas aeruginosa (strain UCBPP-PA14) protein is DNA-directed RNA polymerase subunit alpha.